The chain runs to 515 residues: Anthranilate synthase component 1 (515 aa).

L-tryptophan-binding positions include T40 and 291–293; that span reads PYM. Position 328 to 329 (328 to 329) interacts with chorismate; sequence GT. E361 lines the Mg(2+) pocket. Chorismate is bound by residues Y449, R469, 483–485, and G485; that span reads GAG. A Mg(2+)-binding site is contributed by E498.

The protein belongs to the anthranilate synthase component I family. Heterotetramer consisting of two non-identical subunits: a beta subunit (TrpG) and a large alpha subunit (TrpE). Mg(2+) is required as a cofactor.

It catalyses the reaction chorismate + L-glutamine = anthranilate + pyruvate + L-glutamate + H(+). It participates in amino-acid biosynthesis; L-tryptophan biosynthesis; L-tryptophan from chorismate: step 1/5. With respect to regulation, feedback inhibited by tryptophan. Functionally, part of a heterotetrameric complex that catalyzes the two-step biosynthesis of anthranilate, an intermediate in the biosynthesis of L-tryptophan. In the first step, the glutamine-binding beta subunit (TrpG) of anthranilate synthase (AS) provides the glutamine amidotransferase activity which generates ammonia as a substrate that, along with chorismate, is used in the second step, catalyzed by the large alpha subunit of AS (TrpE) to produce anthranilate. In the absence of TrpG, TrpE can synthesize anthranilate directly from chorismate and high concentrations of ammonia. The protein is Anthranilate synthase component 1 (trpE) of Buchnera aphidicola subsp. Schizaphis graminum (strain Sg).